The following is a 375-amino-acid chain: UDP-4-amino-4,6-dideoxy-N-acetyl-beta-L-altrosamine transaminase (375 aa).

Substrate contacts are provided by residues tyrosine 6, 26-29, alanine 56, and serine 178; that span reads KQLT. Lysine 183 carries the post-translational modification N6-(pyridoxal phosphate)lysine. Residues asparagine 228 and 313-316 each bind substrate; that span reads QVHY.

This sequence belongs to the DegT/DnrJ/EryC1 family.

It catalyses the reaction UDP-4-amino-4,6-dideoxy-N-acetyl-beta-L-altrosamine + 2-oxoglutarate = UDP-2-acetamido-2,6-dideoxy-beta-L-arabino-hex-4-ulose + L-glutamate. Its function is as follows. Catalyzes the second step in the biosynthesis of pseudaminic acid, a sialic-acid-like sugar that is used to modify flagellin. Uses UDP-2-acetamido-2,6-dideoxy-beta-L-arabino-4-hexulose as substrate producing UDP-4-amino-4,6-dideoxy-beta-L-AltNAc. The protein is UDP-4-amino-4,6-dideoxy-N-acetyl-beta-L-altrosamine transaminase (pseC) of Helicobacter pylori (strain ATCC 700392 / 26695) (Campylobacter pylori).